A 614-amino-acid chain; its full sequence is Sulfite reductase [NADPH] flavoprotein alpha-component (614 aa).

The 139-residue stretch at 79-217 folds into the Flavodoxin-like domain; that stretch reads LTIIFASQTG…AATEWRKQVL (139 aa). Residues 85–90, 132–135, and 168–177 contribute to the FMN site; these read SQTGNA, STNG, and LGDSSYQFFC. An FAD-binding FR-type domain is found at 249–463; the sequence is EQPYTASLST…VEHNNNFKLP (215 aa). Residues Thr-337, Thr-371, 401–404, 419–421, Tyr-425, and 434–437 each bind FAD; these read RLYS, TVG, and GGAS. NADP(+) contacts are provided by residues 534–535, 540–544, and Asp-576; these read SR and KVYVQ. Tyr-614 is an FAD binding site.

The protein belongs to the NADPH-dependent sulphite reductase flavoprotein subunit CysJ family. It in the N-terminal section; belongs to the flavodoxin family. In the C-terminal section; belongs to the flavoprotein pyridine nucleotide cytochrome reductase family. Alpha(8)-beta(8). The alpha component is a flavoprotein, the beta component is a hemoprotein. FAD serves as cofactor. FMN is required as a cofactor.

The enzyme catalyses hydrogen sulfide + 3 NADP(+) + 3 H2O = sulfite + 3 NADPH + 4 H(+). Its pathway is sulfur metabolism; hydrogen sulfide biosynthesis; hydrogen sulfide from sulfite (NADPH route): step 1/1. Its function is as follows. Component of the sulfite reductase complex that catalyzes the 6-electron reduction of sulfite to sulfide. This is one of several activities required for the biosynthesis of L-cysteine from sulfate. The flavoprotein component catalyzes the electron flow from NADPH -&gt; FAD -&gt; FMN to the hemoprotein component. In Vibrio cholerae serotype O1 (strain ATCC 39315 / El Tor Inaba N16961), this protein is Sulfite reductase [NADPH] flavoprotein alpha-component.